Here is a 292-residue protein sequence, read N- to C-terminus: Polyketide transferase af380 (292 aa).

Residues 46-267 are abhydrolase domain; the sequence is DVAVWFQQQG…FDLVAGRGHM (222 aa).

It belongs to the polyketide transferase af380 family.

The catalysed reaction is fumagillol + dodecapentaneoyl-[polyketide synthase] = prefumagillin + holo-[polyketide synthase]. The protein operates within secondary metabolite biosynthesis; terpenoid biosynthesis. Functionally, polyketide transferase; part of the gene cluster that mediates the biosynthesis of fumagillin, a meroterpenoid that has numerous biological activities including irreversible inhibition of human type 2 methionine aminopeptidase (METAP2). Within the pathway, the polyketide transferase af380 catalyzes the transfer of a dodecapentaenoyl group synthesized by the polyketide synthase af370 onto 5R-hydroxy-seco-sesquiterpene to produce prefumagillin. The pathway begins with the conversion of farnesyl pyrophosphate (FPP) to beta-trans-bergamotene by the membrane-bound beta-trans-bergamotene synthase af520. The multifunctional cytochrome P450 monooxygenase af510 then converts beta-trans-bergamotene into 5-keto-demethoxyfumagillol via several oxydation steps. 5-keto-demethoxyfumagillol is then subjected to successive C-6 hydroxylation and O-methylation by the dioxygenase af480 and O-methyltransferase af390-400, respectively, to yield 5-keto-fumagillol, which is then stereoselectively reduced by the keto-reductase af490 to 5R-hydroxy-seco-sesquiterpene. The next step is the polyketide transferase af380-catalyzed transfer of a dodecapentaenoyl group synthesized by the polyketide synthase af370 onto 5R-hydroxy-seco-sesquiterpene which leads to the production of prefumagillin. Finally, oxidative cleavage by the monooxygenase af470 converts prefumagillin to fumagillin. This is Polyketide transferase af380 from Aspergillus fumigatus (strain ATCC MYA-4609 / CBS 101355 / FGSC A1100 / Af293) (Neosartorya fumigata).